Here is a 422-residue protein sequence, read N- to C-terminus: 3-phosphoshikimate 1-carboxyvinyltransferase (422 aa).

Positions 20, 21, and 25 each coordinate 3-phosphoshikimate. A phosphoenolpyruvate-binding site is contributed by K20. The phosphoenolpyruvate site is built by G90 and R118. Residues S163, S164, Q165, S191, D306, and K333 each contribute to the 3-phosphoshikimate site. Q165 is a phosphoenolpyruvate binding site. The Proton acceptor role is filled by D306. Phosphoenolpyruvate is bound by residues R337 and R378.

Belongs to the EPSP synthase family. Monomer.

It is found in the cytoplasm. The catalysed reaction is 3-phosphoshikimate + phosphoenolpyruvate = 5-O-(1-carboxyvinyl)-3-phosphoshikimate + phosphate. Its pathway is metabolic intermediate biosynthesis; chorismate biosynthesis. Its function is as follows. Catalyzes the transfer of the enolpyruvyl moiety of phosphoenolpyruvate (PEP) to the 5-hydroxyl of shikimate-3-phosphate (S3P) to produce enolpyruvyl shikimate-3-phosphate and inorganic phosphate. The sequence is that of 3-phosphoshikimate 1-carboxyvinyltransferase from Methanocella arvoryzae (strain DSM 22066 / NBRC 105507 / MRE50).